Here is a 119-residue protein sequence, read N- to C-terminus: Hydrogenase maturation factor HypA (119 aa).

His2 is a binding site for Ni(2+). 4 residues coordinate Zn(2+): Cys73, Cys76, Cys89, and Cys92.

Belongs to the HypA/HybF family.

Functionally, involved in the maturation of [NiFe] hydrogenases. Required for nickel insertion into the metal center of the hydrogenase. This Cupriavidus necator (strain ATCC 17699 / DSM 428 / KCTC 22496 / NCIMB 10442 / H16 / Stanier 337) (Ralstonia eutropha) protein is Hydrogenase maturation factor HypA.